A 63-amino-acid chain; its full sequence is Putative ankyrin repeat protein RF_p14 (63 aa).

ANK repeat units follow at residues 11–43 (KLNQ…CRDH) and 44–63 (QGDT…ILDI).

This chain is Putative ankyrin repeat protein RF_p14, found in Rickettsia felis (strain ATCC VR-1525 / URRWXCal2) (Rickettsia azadi).